The following is a 101-amino-acid chain: Small ribosomal subunit protein uS14 (101 aa).

This sequence belongs to the universal ribosomal protein uS14 family. Part of the 30S ribosomal subunit. Contacts proteins S3 and S10.

Functionally, binds 16S rRNA, required for the assembly of 30S particles and may also be responsible for determining the conformation of the 16S rRNA at the A site. This Paracoccus denitrificans (strain Pd 1222) protein is Small ribosomal subunit protein uS14.